A 243-amino-acid chain; its full sequence is MRKPVIAGNWKMHMTCAQARAWIGTFLPLIAELPNDRHLVVAPPFTAISTLAELSEGTRLELSSQNVHWEGEGAYTAEISPSMLKEHNVQYAIVGHSEPRKYFSESDEQINHRARSAQTNGLIPIVCVGESDEQRSRGEAERVIRRQVEQGLEGLDPSQLVVAYEPIWAIGTGKTCEASEANRICGLIRSWVGSPDLIIQYGGSVKPGNIDQLMGMSDIDGVLVGGASLDPEGFGRIANYVKS.

Residue 9–11 (NWK) coordinates substrate. Catalysis depends on histidine 96, which acts as the Electrophile. Catalysis depends on glutamate 165, which acts as the Proton acceptor. Substrate contacts are provided by residues glycine 171, serine 204, and 225–226 (GG).

This sequence belongs to the triosephosphate isomerase family. In terms of assembly, homodimer.

Its subcellular location is the cytoplasm. It carries out the reaction D-glyceraldehyde 3-phosphate = dihydroxyacetone phosphate. The protein operates within carbohydrate biosynthesis; gluconeogenesis. Its pathway is carbohydrate degradation; glycolysis; D-glyceraldehyde 3-phosphate from glycerone phosphate: step 1/1. Its function is as follows. Involved in the gluconeogenesis. Catalyzes stereospecifically the conversion of dihydroxyacetone phosphate (DHAP) to D-glyceraldehyde-3-phosphate (G3P). The protein is Triosephosphate isomerase of Synechococcus sp. (strain CC9311).